The chain runs to 494 residues: DNA-directed DNA/RNA polymerase mu (494 aa).

The interval 1–24 is disordered; sequence MLPKRRRARVGSPSGDAASSTPPS. Ser12 is subject to Phosphoserine. In terms of domain architecture, BRCT spans 22-122; the sequence is PPSTRFPGVA…QPVPVECRHR (101 aa). Residues 323–332 are involved in ssDNA binding; the sequence is RGKLQGHDVD. Residues Asp330, Asp332, and Asp418 each contribute to the Mg(2+) site.

Belongs to the DNA polymerase type-X family. Mg(2+) serves as cofactor. As to expression, expressed in a number of tissues. Abundant in thymus.

Its subcellular location is the nucleus. The enzyme catalyses DNA(n) + a 2'-deoxyribonucleoside 5'-triphosphate = DNA(n+1) + diphosphate. Functionally, gap-filling polymerase involved in repair of DNA double-strand breaks by non-homologous end joining (NHEJ). Participates in immunoglobulin (Ig) light chain gene rearrangement in V(D)J recombination. The polypeptide is DNA-directed DNA/RNA polymerase mu (POLM) (Homo sapiens (Human)).